We begin with the raw amino-acid sequence, 332 residues long: Ribosomal RNA small subunit methyltransferase H (332 aa).

S-adenosyl-L-methionine-binding positions include 39 to 41 (GGY), D56, F83, D100, and Q107.

It belongs to the methyltransferase superfamily. RsmH family.

The protein localises to the cytoplasm. The catalysed reaction is cytidine(1402) in 16S rRNA + S-adenosyl-L-methionine = N(4)-methylcytidine(1402) in 16S rRNA + S-adenosyl-L-homocysteine + H(+). Specifically methylates the N4 position of cytidine in position 1402 (C1402) of 16S rRNA. The chain is Ribosomal RNA small subunit methyltransferase H from Bartonella tribocorum (strain CIP 105476 / IBS 506).